The primary structure comprises 347 residues: N-acetyl-gamma-glutamyl-phosphate reductase (347 aa).

Cysteine 153 is an active-site residue.

Belongs to the NAGSA dehydrogenase family. Type 1 subfamily.

The protein resides in the cytoplasm. The enzyme catalyses N-acetyl-L-glutamate 5-semialdehyde + phosphate + NADP(+) = N-acetyl-L-glutamyl 5-phosphate + NADPH + H(+). The protein operates within amino-acid biosynthesis; L-arginine biosynthesis; N(2)-acetyl-L-ornithine from L-glutamate: step 3/4. Catalyzes the NADPH-dependent reduction of N-acetyl-5-glutamyl phosphate to yield N-acetyl-L-glutamate 5-semialdehyde. This Mycobacterium leprae (strain Br4923) protein is N-acetyl-gamma-glutamyl-phosphate reductase.